Consider the following 365-residue polypeptide: Probable secreted beta-glucosidase UTH1 (365 aa).

The signal sequence occupies residues 1–17; the sequence is MKLSALLALSASTAVLA.

The protein belongs to the SUN family.

The protein resides in the mitochondrion outer membrane. Its subcellular location is the secreted. The protein localises to the cell wall. In terms of biological role, involved in aging, oxidative stress response, and in the regulation of mitochondrial biogenesis. Inactivation of UTH1 increases life span, leads to higher resistance to heat stress and against hydrogen peroxide, and increases sensitivity to the superoxide radical-generating drug paraquat and to copper. Also required for the selective autophagic degradation of mitochondria (mitophagy) in response to nitrogen starvation. Involved in the remodeling of the cell wall during the various phases of yeast culture development and under various environmental conditions and plays a role in septation. Involved in cell sensitivity to boric acid. The polypeptide is Probable secreted beta-glucosidase UTH1 (UTH1) (Saccharomyces cerevisiae (strain ATCC 204508 / S288c) (Baker's yeast)).